A 312-amino-acid polypeptide reads, in one-letter code: Probable deoxyhypusine synthase (312 aa).

The active-site Nucleophile is the lysine 285.

This sequence belongs to the deoxyhypusine synthase family. Requires NAD(+) as cofactor.

The enzyme catalyses [eIF5A protein]-L-lysine + spermidine = [eIF5A protein]-deoxyhypusine + propane-1,3-diamine. Its pathway is protein modification; eIF5A hypusination. In terms of biological role, catalyzes the NAD-dependent oxidative cleavage of spermidine and the subsequent transfer of the butylamine moiety of spermidine to the epsilon-amino group of a specific lysine residue of the eIF-5A precursor protein to form the intermediate deoxyhypusine residue. In Saccharolobus solfataricus (strain ATCC 35092 / DSM 1617 / JCM 11322 / P2) (Sulfolobus solfataricus), this protein is Probable deoxyhypusine synthase (dys).